Here is a 258-residue protein sequence, read N- to C-terminus: uncharacterized protein (258 aa).

The N-terminal stretch at 1-19 (MVGILPLCCSGCVPSLCCS) is a signal peptide. Transmembrane regions (helical) follow at residues 94-114 (GLLL…NWTG), 197-217 (CLIL…LPYI), and 219-239 (PGLS…SSLV).

The protein resides in the membrane. This is an uncharacterized protein from Homo sapiens (Human).